A 184-amino-acid chain; its full sequence is Nucleoside triphosphate pyrophosphatase (184 aa).

The Proton acceptor role is filled by Asp-71.

This sequence belongs to the Maf family. A divalent metal cation serves as cofactor.

The protein localises to the cytoplasm. It catalyses the reaction a ribonucleoside 5'-triphosphate + H2O = a ribonucleoside 5'-phosphate + diphosphate + H(+). It carries out the reaction a 2'-deoxyribonucleoside 5'-triphosphate + H2O = a 2'-deoxyribonucleoside 5'-phosphate + diphosphate + H(+). Nucleoside triphosphate pyrophosphatase. May have a dual role in cell division arrest and in preventing the incorporation of modified nucleotides into cellular nucleic acids. This Synechococcus sp. (strain CC9605) protein is Nucleoside triphosphate pyrophosphatase.